The primary structure comprises 503 residues: Probable dolichyl pyrophosphate Man9GlcNAc2 alpha-1,3-glucosyltransferase (503 aa).

Over 1–46 (MKERIKDKAWRPQFIKLNNPDTSKKIVSQKSKKPEIVDLSSPGNND) the chain is Cytoplasmic. Residues 47-67 (LVTISILCVLLCFQLAISLNP) traverse the membrane as a helical segment. Residues 68-151 (HSGESQPPMY…SRGYESIAHK (84 aa)) are Lumenal-facing. A helical transmembrane segment spans residues 152-172 (LFMRLSAIIPFYIFYLPPLIF). The Cytoplasmic portion of the chain corresponds to 173-181 (YFTRSKKMS). The helical transmembrane segment at 182 to 202 (PILYALALLYPSLLVIDNGHF) threads the bilayer. Topologically, residues 203–211 (QYNSISLGL) are lumenal. A helical membrane pass occupies residues 212–232 (FLATYMFLTKNFTIIGSILFV). Residues 233 to 239 (AALNYKQ) lie on the Cytoplasmic side of the membrane. The helical transmembrane segment at 240-257 (MELYHALPVFVFILARSI) threads the bilayer. Topologically, residues 258-268 (NKTQLFNSFRR) are lumenal. The helical transmembrane segment at 269-289 (ILTIGLFVVGTFLIIWLPFLL) threads the bilayer. Residues 290–332 (TGTAKDVIIRVFPFNRGLYEDKVASFWCAFSFILKRLPLQSVQ) are Cytoplasmic-facing. The chain crosses the membrane as a helical span at residues 333 to 353 (IYISTALVLAGSAPSLLVLFL). The Lumenal segment spans residues 354 to 359 (RPTEKQ). The chain crosses the membrane as a helical span at residues 360–379 (FRISLTATGLSFFLFSFHVH). Residues 380–382 (EKT) are Cytoplasmic-facing. A helical transmembrane segment spans residues 383–403 (ILLAAVPALLLISEYTSLVIW). Over 404–420 (FLNITNISIFSLCVKDN) the chain is Lumenal. The chain crosses the membrane as a helical span at residues 421–441 (FALSLSFFFAYFVVSYAYTAP). Residues 442–443 (RK) are Cytoplasmic-facing. A helical transmembrane segment spans residues 444-464 (ISHILTILIGFAICILELYGP). Residues 465–474 (SNQRFPHIYQ) lie on the Lumenal side of the membrane. The chain crosses the membrane as a helical span at residues 475–495 (LANAFFSCVHFIYFLLYLSFA). Residues 496 to 503 (SFEKTKKE) are Cytoplasmic-facing.

The protein belongs to the ALG6/ALG8 glucosyltransferase family.

The protein resides in the endoplasmic reticulum membrane. It catalyses the reaction an alpha-D-Man-(1-&gt;2)-alpha-D-Man-(1-&gt;2)-alpha-D-Man-(1-&gt;3)-[alpha-D-Man-(1-&gt;2)-alpha-D-Man-(1-&gt;3)-[alpha-D-Man-(1-&gt;2)-alpha-D-Man-(1-&gt;6)]-alpha-D-Man-(1-&gt;6)]-beta-D-Man-(1-&gt;4)-beta-D-GlcNAc-(1-&gt;4)-alpha-D-GlcNAc-diphospho-di-trans,poly-cis-dolichol + a di-trans,poly-cis-dolichyl beta-D-glucosyl phosphate = an alpha-D-Glc-(1-&gt;3)-alpha-D-Man-(1-&gt;2)-alpha-D-Man-(1-&gt;2)-alpha-D-Man-(1-&gt;3)-[alpha-D-Man-(1-&gt;2)-alpha-D-Man-(1-&gt;3)-[alpha-D-Man-(1-&gt;2)-alpha-D-Man-(1-&gt;6)]-alpha-D-Man-(1-&gt;6)]-beta-D-Man-(1-&gt;4)-beta-D-GlcNAc-(1-&gt;4)-alpha-D-GlcNAc-diphospho-di-trans,poly-cis-dolichol + a di-trans,poly-cis-dolichyl phosphate + H(+). It participates in protein modification; protein glycosylation. Its function is as follows. Adds the first glucose residue to the lipid-linked oligosaccharide precursor for N-linked glycosylation. Transfers glucose from dolichyl phosphate glucose (Dol-P-Glc) onto the lipid-linked oligosaccharide Man(9)GlcNAc(2)-PP-Dol. The protein is Probable dolichyl pyrophosphate Man9GlcNAc2 alpha-1,3-glucosyltransferase of Caenorhabditis elegans.